A 347-amino-acid chain; its full sequence is Very-long-chain 3-oxoacyl-CoA reductase (347 aa).

The chain crosses the membrane as a helical span at residues 22 to 42; that stretch reads LLWSIFGFGVLKATTLILRIM. V68, D122, N149, Y223, K227, V256, and S258 together coordinate NADP(+). Y223 (proton donor) is an active-site residue. K227 functions as the Lowers pKa of active site Tyr in the catalytic mechanism.

The protein belongs to the short-chain dehydrogenases/reductases (SDR) family.

It localises to the endoplasmic reticulum membrane. The catalysed reaction is a very-long-chain (3R)-3-hydroxyacyl-CoA + NADP(+) = a very-long-chain 3-oxoacyl-CoA + NADPH + H(+). The protein operates within lipid metabolism; fatty acid biosynthesis. In terms of biological role, component of the microsomal membrane bound fatty acid elongation system, which produces the 26-carbon very long-chain fatty acids (VLCFA) from palmitate. Catalyzes the reduction of the 3-ketoacyl-CoA intermediate that is formed in each cycle of fatty acid elongation. VLCFAs serve as precursors for ceramide and sphingolipids. The protein is Very-long-chain 3-oxoacyl-CoA reductase of Vanderwaltozyma polyspora (strain ATCC 22028 / DSM 70294 / BCRC 21397 / CBS 2163 / NBRC 10782 / NRRL Y-8283 / UCD 57-17) (Kluyveromyces polysporus).